A 322-amino-acid chain; its full sequence is Hapalindole dimethylallyltransferase (322 aa).

Dimethylallyl diphosphate is bound by residues R46, R60, K115, N166, Y168, R221, Y225, and K275.

Belongs to the aromatic prenyltransferase family.

The enzyme catalyses hapalindole G + dimethylallyl diphosphate = ambiguine A + diphosphate. It catalyses the reaction hapalindole U + dimethylallyl diphosphate + H(+) = ambiguine H + diphosphate. Activity is slightly increased in the presence of Mg(2+). Prenyltransferase involved in the biosynthesis of ambiguines, a family of hapalindole-type alkaloids. Catalyzes the reverse prenylation of hapalindole G or U at the C2 position with dimethylallyl diphosphate (DMAPP) to generate ambiguine A or H, respectively. In addition, accepts hapalindole A, an epimer of hapalindole G, and catalyzes normal prenylation at its C2 position. This chain is Hapalindole dimethylallyltransferase, found in Fischerella ambigua (strain UTEX 1903).